The sequence spans 239 residues: Ribonuclease HII (239 aa).

One can recognise an RNase H type-2 domain in the interval 30-221; that stretch reads GPVAGVDEVG…VRRVANGSGG (192 aa). Residues Asp36, Glu37, and Asp130 each coordinate a divalent metal cation.

Belongs to the RNase HII family. Requires Mn(2+) as cofactor. The cofactor is Mg(2+).

It localises to the cytoplasm. It carries out the reaction Endonucleolytic cleavage to 5'-phosphomonoester.. Functionally, endonuclease that specifically degrades the RNA of RNA-DNA hybrids. The protein is Ribonuclease HII of Mycolicibacterium paratuberculosis (strain ATCC BAA-968 / K-10) (Mycobacterium paratuberculosis).